A 188-amino-acid chain; its full sequence is Elongation factor P (188 aa).

This sequence belongs to the elongation factor P family.

The protein localises to the cytoplasm. It functions in the pathway protein biosynthesis; polypeptide chain elongation. Involved in peptide bond synthesis. Stimulates efficient translation and peptide-bond synthesis on native or reconstituted 70S ribosomes in vitro. Probably functions indirectly by altering the affinity of the ribosome for aminoacyl-tRNA, thus increasing their reactivity as acceptors for peptidyl transferase. This chain is Elongation factor P, found in Rhodopseudomonas palustris (strain BisA53).